The primary structure comprises 185 residues: UPF0215 protein APE_0476.1 (185 aa).

It belongs to the UPF0215 family.

This is UPF0215 protein APE_0476.1 from Aeropyrum pernix (strain ATCC 700893 / DSM 11879 / JCM 9820 / NBRC 100138 / K1).